The chain runs to 305 residues: tRNA dimethylallyltransferase (305 aa).

ATP is bound at residue 8–15; it reads GPTAVGKT. 10 to 15 provides a ligand contact to substrate; that stretch reads TAVGKT. Positions 33 to 36 are interaction with substrate tRNA; the sequence is DSRQ.

This sequence belongs to the IPP transferase family. Monomer. The cofactor is Mg(2+).

It carries out the reaction adenosine(37) in tRNA + dimethylallyl diphosphate = N(6)-dimethylallyladenosine(37) in tRNA + diphosphate. In terms of biological role, catalyzes the transfer of a dimethylallyl group onto the adenine at position 37 in tRNAs that read codons beginning with uridine, leading to the formation of N6-(dimethylallyl)adenosine (i(6)A). This is tRNA dimethylallyltransferase from Thermotoga neapolitana (strain ATCC 49049 / DSM 4359 / NBRC 107923 / NS-E).